The sequence spans 65 residues: Conotoxin Cal1.5 (65 aa).

A signal peptide spans 1–18; it reads MRCLPVFIILLLLASTAA. A propeptide spanning residues 19-49 is cleaved from the precursor; sequence VDVAGSKLKRRLERKPYQGSQAYVKKTAFGL. 2 disulfide bridges follow: Cys-52–Cys-62 and Cys-53–Cys-59. Pro-61 is subject to 4-hydroxyproline.

Belongs to the conotoxin T superfamily. In terms of tissue distribution, expressed by the venom duct.

The protein localises to the secreted. Functionally, probable neurotoxin with unknown target. Possibly targets ion channels. The chain is Conotoxin Cal1.5 from Californiconus californicus (California cone).